Consider the following 2039-residue polypeptide: MSRSRPAKPSKSVKTKLQKKKDIQMKTKTSKQAVRHGASAKAVNPGKPKQLIKRRDGKKETEDKTPTPAPSFLTRAGAARMNRDRNQVLFQNPDSLTCNGFTMALRRTSLSWRLSQRPVVTPKPKKVPPSKKQCTHNIQDEPGVKHSENDSVPSQHATVSPGTENGEQNRCLVEGESQEITQSCPVFEERIEDTQSCISASGNLEAEISWPLEGTHCEELLSHQTSDNECTSPQECAPLPQRSTSEVTSQKNTSNQLADLSSQVESIKLSDPSPNPTGSDHNGFPDSSFRIVPELDLKTCMPLDESVYPTALIRFILAGSQPDVFDTKPQEKTLITTPEQVGSHPNQVLDATSVLGQAFSTLPLQWGFSGANLVQVEALGKGSDSPEDLGAITMLNQQETVAMDMDRNATPDLPIFLPKPPNTVATYSSPLLGPEPHSSTSCGLEVQGATPILTLDSGHTPQLPPNPESSSVPLVIAANGTRAEKQFGTSLFPAVPQGFTVAAENEVQHAPLDLTQGSQAAPSKLEGEISRVSITGSADVKATAMSMPVTQASTSSPPCNSTPPMVERRKRKACGVCEPCQQKANCGECTYCKNRKNSHQICKKRKCEVLKKKPEATSQAQVTKENKRPQREKKPKVLKTDFNNKPVNGPKSESMDCSRRGHGEEEQRLDLITHPLENVRKNAGGMTGIEVEKWAPNKKSHLAEGQVKGSCDANLTGVENPQPSEDDKQQTNPSPTFAQTIRNGMKNVHCLPTDTHLPLNKLNHEEFSKALGNNSSKLLTDPSNCKDAMSVTTSGGECDHLKGPRNTLLFQKPGLNCRSGAEPTIFNNHPNTHSAGSRPHPPEKVPNKEPKDGSPVQPSLLSLMKDRRLTLEQVVAIEALTQLSEAPSESSSPSKPEKDEEAHQKTASLLNSCKAILHSVRKDLQDPNVQGKGLHHDTVVFNGQNRTFKSPDSFATNQALIKSQGYPSSPTAEKKGAAGGRAPFDGFENSHPLPIESHNLENCSQVLSCDQNLSSHDPSCQDAPYSQIEEDVAAQLTQLASTINHINAEVRNAESTPESLVAKNTKQKHSQEKRMVHQKPPSSTQTKPSVPSAKPKKAQKKARATPHANKRKKKPPARSSQENDQKKQEQLAIEYSKMHDIWMSSKFQRFGQSSPRSFPVLLRNIPVFNQILKPVTQSKTPSQHNELFPPINQIKFTRNPELAKEKVKVEPSDSLPTCQFKTESGGQTFAEPADNSQGQPMVSVNQEAHPLPQSPPSNQCANIMAGAAQTQFHLGAQENLVHQIPPPTLPGTSPDTLLPDPASILRKGKVLHFDGITVVTEKREAQTSSNGPLGPTTDSAQSEFKESIMDLLSKPAKNLIAGLKEQEAAPCDCDGGTQKEKGPYYTHLGAGPSVAAVRELMETRFGQKGKAIRIEKIVFTGKEGKSSQGCPVAKWVIRRSGPEEKLICLVRERVDHHCSTAVIVVLILLWEGIPRLMADRLYKELTENLRSYSGHPTDRRCTLNKKRTCTCQGIDPKTCGASFSFGCSWSMYFNGCKFGRSENPRKFRLAPNYPLHNYYKRITGMSSEGSDVKTGWIIPDRKTLISREEKQLEKNLQELATVLAPLYKQMAPVAYQNQVEYEEVAGDCRLGNEEGRPFSGVTCCMDFCAHSHKDIHNMHNGSTVVCTLIRADGRDTNCPEDEQLHVLPLYRLADTDEFGSVEGMKAKIKSGAIQVNGPTRKRRLRFTEPVPRCGKRAKMKQNHNKSGSHNTKSFSSASSTSHLVKDESTDFCPLQASSAETSTCTYSKTASGGFAETSSILHCTMPSGAHSGANAAAGECTGTVQPAEVAAHPHQSLPTADSPVHAEPLTSPSEQLTSNQSNQQLPLLSNSQKLASCQVEDERHPEADEPQHPEDDNLPQLDEFWSDSEEIYADPSFGGVAIAPIHGSVLIECARKELHATTSLRSPKRGVPFRVSLVFYQHKSLNKPNHGFDINKIKCKCKKVTKKKPADRECPDVSPEANLSHQIPSRVASTLTRDNVVTVSPYSLTHVAGPYNRWV.

Residues 1–19 (MSRSRPAKPSKSVKTKLQK) show a composition bias toward basic residues. Disordered stretches follow at residues 1 to 79 (MSRS…AGAA), 119 to 168 (VVTP…NGEQ), and 227 to 286 (DNEC…GFPD). 2 stretches are compositionally biased toward basic and acidic residues: residues 53 to 65 (KRRDGKKETEDKT) and 138 to 149 (IQDEPGVKHSEN). 2 stretches are compositionally biased toward polar residues: residues 150 to 168 (DSVPSQHATVSPGTENGEQ) and 241 to 265 (QRSTSEVTSQKNTSNQLADLSSQVE). Residues 512-657 (LDLTQGSQAA…NGPKSESMDC (146 aa)) form a sufficient for binding to genomic CpG islands region. Residues 567–608 (ERRKRKACGVCEPCQQKANCGECTYCKNRKNSHQICKKRKCE) form a CXXC-type zinc finger. Positions 574, 577, 580, 586, 589, 592, 602, and 607 each coordinate Zn(2+). Disordered stretches follow at residues 613–670 (KPEA…QRLD), 711–735 (CDANLTGVENPQPSEDDKQQTNPSP), 820–859 (GAEPTIFNNHPNTHSAGSRPHPPEKVPNKEPKDGSPVQPS), 882–906 (QLSEAPSESSSPSKPEKDEEAHQKT), 964–993 (QGYPSSPTAEKKGAAGGRAPFDGFENSHPL), 1050–1129 (VRNA…KKQE), 1209–1240 (VEPSDSLPTCQFKTESGGQTFAEPADNSQGQP), and 1322–1341 (KREAQTSSNGPLGPTTDSAQ). Basic and acidic residues predominate over residues 653-670 (ESMDCSRRGHGEEEQRLD). The span at 825-835 (IFNNHPNTHSA) shows a compositional bias: polar residues. Residues 840–852 (HPPEKVPNKEPKD) show a composition bias toward basic and acidic residues. Residue serine 854 is modified to Phosphoserine. The span at 884 to 894 (SEAPSESSSPS) shows a compositional bias: low complexity. Residues 895–904 (KPEKDEEAHQ) show a composition bias toward basic and acidic residues. A compositionally biased stretch (polar residues) spans 1053–1064 (AESTPESLVAKN). The segment covering 1094–1116 (KPKKAQKKARATPHANKRKKKPP) has biased composition (basic residues). Composition is skewed to polar residues over residues 1214-1227 (SLPTCQFKTESGGQ) and 1326-1341 (QTSSNGPLGPTTDSAQ). The Zn(2+) site is built by cysteine 1371, cysteine 1373, cysteine 1430, histidine 1456, and cysteine 1458. Arginine 1499 contacts 2-oxoglutarate. Zn(2+) contacts are provided by cysteine 1509, cysteine 1511, cysteine 1527, and cysteine 1536. Residues 1528–1541 (SWSMYFNGCKFGRS) are interaction with DNA. Lysine 1537 participates in a covalent cross-link: Glycyl lysine isopeptide (Lys-Gly) (interchain with G-Cter in ubiquitin). Cysteine 1628 contributes to the Zn(2+) binding site. 2-oxoglutarate is bound at residue cysteine 1644. Residue histidine 1650 participates in Zn(2+) binding. Fe cation-binding residues include histidine 1652 and aspartate 1654. Asparagine 1657 is a binding site for substrate. 2-oxoglutarate is bound at residue histidine 1685. Residues 1734-1743 (GKRAKMKQNH) are compositionally biased toward basic residues. Disordered regions lie at residues 1734-1760 (GKRAKMKQNHNKSGSHNTKSFSSASST) and 1830-1901 (AAHP…LPQL). Over residues 1748–1760 (SHNTKSFSSASST) the composition is skewed to low complexity. A compositionally biased stretch (polar residues) spans 1850 to 1875 (TSPSEQLTSNQSNQQLPLLSNSQKLA). The segment covering 1880 to 1895 (EDERHPEADEPQHPED) has biased composition (basic and acidic residues). Histidine 1939 contributes to the Fe cation binding site. 1954-1956 (RVS) is a 2-oxoglutarate binding site. Residue 1960–1962 (YQH) coordinates substrate. Histidine 1970 serves as a coordination point for Zn(2+).

It belongs to the TET family. Interacts with SIN3A; recruits the transcriptional co-repressor SIN3A to gene promoters. Interacts with HCFC1. Interacts (via C-terminus) with OGT. Found in a complex composed of at least SINHCAF, SIN3A, HDAC1, SAP30, RBBP4, OGT and TET1. Interacts with QSER1. Interacts with NONO (via DNA-binding domain); this interaction recruits TET1 to genomic loci. Interacts with FOXA2; this interaction may recruit TET1 to specific enhancers to preserve their unmethylated status and hence allowing gene expression. Interacts with RNF2. Directly interacts (via C-terminus) with the DCAF1 component of the CRL4(VprBP) E3 ubiquitin-protein ligase complex. In terms of assembly, interacts with UHRF1; this interaction induces the recruitment of TET1 to replicating heterochromatin. Interacts with DCAF1. It depends on Fe(2+) as a cofactor. Zn(2+) is required as a cofactor. Post-translationally, glycosylated. Interaction with OGT leads to GlcNAcylation. In terms of processing, monoubiquitinated by the DCX (DDB1-CUL4-X-box) E3 ubiquitin-protein ligase complex called CRL4(VprBP) or CUL4A-RBX1-DDB1-DCAF1/VPRBP complex. Monoubiquitinated by the DCX (DDB1-CUL4-X-box) E3 ubiquitin-protein ligase complex called CRL4(VprBP) or CUL4A-RBX1-DDB1-DCAF1/VPRBP complex; this modification promotes binding to DNA. As to expression, expressed in germinal vesicle (GV) stage and MII-stage oocytes and in early embryos. Also detected somatic tissues, including brain, liver and kidney, but at very low levels. In terms of tissue distribution, predominantly expressed in early embryos. Also expressed in embryonic stem cells and in primordial germ cells. Expressed in adult tissues, including brain cortex, cerebellum, heart, kidney, liver, muscle and spleen, although at much lower levels than isoform 2. In the brain, expressed at higher levels in glial cells than in neurons. Expressed in placenta. Expressed in the pituitary, most probably in thyrotropes. Preferentially expressed in differentiated cells, including in cerebral cortex, cerebellum and thymus. Also expressed in heart, kidney, liver, muscle and spleen at much higher levels than isoform 1. In the brain, expressed at higher levels in neurons than in glial cells. Expressed in the olfactory bulb and in the mammary gland.

It is found in the nucleus. It localises to the chromosome. The catalysed reaction is a 5-methyl-2'-deoxycytidine in DNA + 2-oxoglutarate + O2 = a 5-hydroxymethyl-2'-deoxycytidine in DNA + succinate + CO2. It carries out the reaction a 5-hydroxymethyl-2'-deoxycytidine in DNA + 2-oxoglutarate + O2 = a 5-formyl-2'-deoxycytidine in DNA + succinate + CO2 + H2O. It catalyses the reaction a 5-formyl-2'-deoxycytidine in DNA + 2-oxoglutarate + O2 = a 5-carboxyl-2'-deoxycytidine in DNA + succinate + CO2 + H(+). Dioxygenase that plays a key role in active DNA demethylation, by catalyzing the sequential oxidation of the modified genomic base 5-methylcytosine (5mC) into 5-hydroxymethylcytosine (5hmC), 5-formylcytosine (5fC), and 5-carboxylcytosine (5caC). In addition to its role in DNA demethylation, plays a more general role in chromatin regulation by recruiting histone modifying protein complexes to alter histone marks and chromatin accessibility, leading to both activation and repression of gene expression. Plays therefore a role in many biological processes, including stem cell maintenance, T- and B-cell development, inflammation regulation, iron homeostasis, neural activity or DNA repair. Involved in the balance between pluripotency and lineage commitment of cells it plays a role in embryonic stem cells maintenance and inner cell mass cell specification. Together with QSER1, plays an essential role in the protection and maintenance of transcriptional and developmental programs to inhibit the binding of DNMT3A/3B and therefore de novo methylation. May play a role in the pancreatic beta-cell specification during development. In this context, may function as an upstream epigenetic regulator of PAX4 presumably through direct recruitment by FOXA2 to a PAX4 enhancer to preserve its unmethylated status, thereby potentiating PAX4 expression to adopt beta-cell fate during endocrine lineage commitment. Under DNA hypomethylation conditions, such as in female meiotic germ cells, may induce epigenetic reprogramming of pericentromeric heterochromatin (PCH), the constitutive heterochromatin of pericentromeric regions. PCH forms chromocenters in the interphase nucleus and chromocenters cluster at the prophase of meiosis. In this context, may also be essential for chromocenter clustering in a catalytic activity-independent manner, possibly through the recruitment polycomb repressive complex 1 (PRC1) to the chromocenters. During embryonic development, may be required for normal meiotic progression in oocytes and meiotic gene activation. Binds preferentially to DNA containing cytidine-phosphate-guanosine (CpG) dinucleotides over CpH (H=A, T, and C), hemimethylated-CpG and hemimethylated-hydroxymethyl-CpG. Functionally, dioxygenase that plays a key role in active DNA demethylation. Binds to promoters, particularly to those with high CG content. In hippocampal neurons, isoform 1 regulates the expression of a unique subset of genes compared to isoform 2, although some overlap between both isoforms, hence differentially regulates excitatory synaptic transmission. In hippocampal neuron cell cultures, isoform 1 controls both miniature excitatory postsynaptic current amplitude and frequency. Isoform 1 may regulate genes involved in hippocampal-dependent memory, leading to positive regulation of memory, contrary to isoform 2 that may decrease memory. Its function is as follows. Dioxygenase that plays a key role in active DNA demethylation. As isoform 1, binds to promoters, particularly to those with high CG content, however displays reduced global chromatin affinity compared with isoform 1, leading to decreased global DNA demethylation compared with isoform 1. Contrary to isoform 1, isoform 2 localizes during S phase to sites of ongoing DNA replication in heterochromatin, causing a significant de novo 5hmC formation, globally, and more so in heterochromatin, including LINE 1 interspersed DNA repeats leading to their activation. In hippocampal neurons, isoform 2 regulates the expression of a unique subset of genes compared with isoform 1, although some overlap between both isoforms, hence differentially regulating excitatory synaptic transmission. In hippocampal neuron cell cultures, isoform 2 controls miniature excitatory postsynaptic current frequency, but not amplitude. Isoform 2 may regulate genes involved in hippocampal-dependent memory, leading to negative regulation of memory, contrary to isoform 1 that may improve memory. In immature and partially differentiated gonadotrope cells, represses luteinizing hormone gene LHB expression directly and does not catalyze 5hmC at the gene promoter. This Mus musculus (Mouse) protein is Methylcytosine dioxygenase TET1 (Tet1).